The chain runs to 514 residues: Peptide chain release factor 3 (514 aa).

Residues 8-268 (KKRRTFAIIS…TFLKFAPEPH (261 aa)) form the tr-type G domain. GTP is bound by residues 17–24 (SHPDAGKT), 85–89 (DTPGH), and 139–142 (NKLD).

This sequence belongs to the TRAFAC class translation factor GTPase superfamily. Classic translation factor GTPase family. PrfC subfamily.

It is found in the cytoplasm. Functionally, increases the formation of ribosomal termination complexes and stimulates activities of RF-1 and RF-2. It binds guanine nucleotides and has strong preference for UGA stop codons. It may interact directly with the ribosome. The stimulation of RF-1 and RF-2 is significantly reduced by GTP and GDP, but not by GMP. The polypeptide is Peptide chain release factor 3 (Streptococcus pneumoniae serotype 19F (strain G54)).